The following is a 100-amino-acid chain: Large ribosomal subunit protein uL23 (100 aa).

It belongs to the universal ribosomal protein uL23 family. In terms of assembly, part of the 50S ribosomal subunit. Contacts protein L29, and trigger factor when it is bound to the ribosome.

One of the early assembly proteins it binds 23S rRNA. One of the proteins that surrounds the polypeptide exit tunnel on the outside of the ribosome. Forms the main docking site for trigger factor binding to the ribosome. This is Large ribosomal subunit protein uL23 from Vibrio atlanticus (strain LGP32) (Vibrio splendidus (strain Mel32)).